Here is a 1244-residue protein sequence, read N- to C-terminus: Membrane-associated phosphatidylinositol transfer protein 1 (1244 aa).

Thr-59 carries the post-translational modification Phosphothreonine. Disordered stretches follow at residues 258–331 (KCNT…QSLS) and 339–358 (ARDSENSSEEEFFDAHEGFS). Position 287 is a phosphothreonine; by CDK1 (Thr-287). Over residues 299–319 (ASPDASFGKQWSSSSRSSYSS) the composition is skewed to low complexity. Residues Ser-300, Ser-304, Ser-319, Ser-326, Ser-329, Ser-342, Ser-345, Ser-346, and Ser-373 each carry the phosphoserine modification. Ser-382 carries the phosphoserine; by CDK1 modification. A disordered region spans residues 581–682 (AGTGSRGSSR…SSEAPDGPSS (102 aa)). Ser-593, Ser-600, and Ser-621 each carry phosphoserine. Polar residues predominate over residues 643–658 (GSQNSLQAAPATTSSW). The region spanning 686–880 (LDFKVSGFFL…VAFILRQVIE (195 aa)) is the DDHD domain. Ser-896 carries the phosphoserine modification. Residues 1206-1244 (QLLRSRGPSQAEREGPGTPPTTLARGKARSISLKLDSEE) are disordered. Omega-N-methylarginine is present on residues Arg-1211 and Arg-1218. Ser-1237 carries the phosphoserine modification.

It belongs to the PtdIns transfer protein family. PI transfer class IIA subfamily. As to quaternary structure, interacts with PIK4CA. Interacts with PTK2B via its C-terminus. Interacts with RHOA. Has higher affinity for the inactive, GDP-bound form of RHOA. The CDK1-phosphorylated form interacts with PLK1. Interacts with VAPB. Post-translationally, phosphorylated on multiple sites by CDK1 at the onset of mitosis. Phosphorylation facilitates dissociation from the Golgi complex and is required for interaction with PLK1. Phosphorylated on threonine residues upon treatment with oleic acid. In terms of processing, phosphorylated on tyrosine residues by PTK2B. In terms of tissue distribution, ubiquitous.

Its subcellular location is the cytoplasm. The protein localises to the golgi apparatus. It localises to the golgi stack membrane. It is found in the endoplasmic reticulum membrane. The protein resides in the lipid droplet. Its subcellular location is the cleavage furrow. The protein localises to the midbody. It catalyses the reaction a 1,2-diacyl-sn-glycero-3-phospho-(1D-myo-inositol)(in) = a 1,2-diacyl-sn-glycero-3-phospho-(1D-myo-inositol)(out). In terms of biological role, catalyzes the transfer of phosphatidylinositol (PI) between membranes. Binds PI, phosphatidylcholine (PC) and phosphatidic acid (PA) with the binding affinity order of PI &gt; PA &gt; PC. Regulates RHOA activity, and plays a role in cytoskeleton remodeling. Necessary for normal completion of cytokinesis. Plays a role in maintaining normal diacylglycerol levels in the Golgi apparatus. Necessary for maintaining the normal structure of the endoplasmic reticulum and the Golgi apparatus. Required for protein export from the endoplasmic reticulum and the Golgi. Binds calcium ions. The polypeptide is Membrane-associated phosphatidylinositol transfer protein 1 (PITPNM1) (Homo sapiens (Human)).